The chain runs to 37 residues: Potassium channel toxin alpha-KTx 3.9 (37 aa).

Intrachain disulfides connect Cys-7/Cys-27, Cys-13/Cys-32, and Cys-17/Cys-34. The tract at residues 25–32 is interaction with Ca(2+)-activated K(+) channels; that stretch reads GKCMNRKC.

The protein belongs to the short scorpion toxin superfamily. Potassium channel inhibitor family. Alpha-KTx 03 subfamily. Expressed by the venom gland.

It is found in the secreted. In terms of biological role, binds and inhibits potassium channels. Intracerebroventricular injection into mice induces paralyzing symptoms followed by death. Its binding affinity to rat brain synaptosomes is 5-fold lower than this of KTX 1. This chain is Potassium channel toxin alpha-KTx 3.9 (KTX3), found in Buthus occitanus tunetanus (Common European scorpion).